Consider the following 286-residue polypeptide: ATP synthase gamma chain (286 aa).

It belongs to the ATPase gamma chain family. As to quaternary structure, F-type ATPases have 2 components, CF(1) - the catalytic core - and CF(0) - the membrane proton channel. CF(1) has five subunits: alpha(3), beta(3), gamma(1), delta(1), epsilon(1). CF(0) has three main subunits: a, b and c.

Its subcellular location is the cell inner membrane. Produces ATP from ADP in the presence of a proton gradient across the membrane. The gamma chain is believed to be important in regulating ATPase activity and the flow of protons through the CF(0) complex. This chain is ATP synthase gamma chain, found in Shewanella oneidensis (strain ATCC 700550 / JCM 31522 / CIP 106686 / LMG 19005 / NCIMB 14063 / MR-1).